The sequence spans 355 residues: Protein RecA (355 aa).

65 to 72 contributes to the ATP binding site; it reads GPESSGKT.

It belongs to the RecA family.

It is found in the cytoplasm. Functionally, can catalyze the hydrolysis of ATP in the presence of single-stranded DNA, the ATP-dependent uptake of single-stranded DNA by duplex DNA, and the ATP-dependent hybridization of homologous single-stranded DNAs. It interacts with LexA causing its activation and leading to its autocatalytic cleavage. This Pseudomonas putida (strain W619) protein is Protein RecA.